A 794-amino-acid chain; its full sequence is Protein smoothened (794 aa).

Positions 1–15 (GPCWLWALALGLALG) are cleaved as a signal peptide. The Extracellular portion of the chain corresponds to 16–201 (PRRCPAAPLN…FTETEHREMH (186 aa)). N-linked (GlcNAc...) asparagine glycosylation is present at N25. Disulfide bonds link C34–C148, C40–C104, C48–C97, C88–C124, and C117–C139. An FZ domain is found at 35–151 (RRPAACERLR…DRFPEGCPNE (117 aa)). Residue D65 coordinates cholesterol. N-linked (GlcNAc...) asparagine glycosylation occurs at N158. Disulfide bonds link C163/C183 and C187/C264. The chain crosses the membrane as a helical span at residues 202–222 (VYIAFSSVTISCTFFTLATFV). The Cytoplasmic portion of the chain corresponds to 223–231 (ADWRNSNRY). The chain crosses the membrane as a helical span at residues 232-252 (PAVILFYVNACFFVGSIGCVA). Residues 253–283 (QFMDGARDEIVCRADGTMRLGEPTSNETLSC) are Extracellular-facing. Residue N278 is glycosylated (N-linked (GlcNAc...) asparagine). Residues C283 and C359 are joined by a disulfide bond. The helical transmembrane segment at 284-304 (VIIFVIVYYSLMSGVIWFVML) threads the bilayer. Topologically, residues 305 to 327 (TYAWHTSFKALGTTYQPLLGKTS) are cytoplasmic. The chain crosses the membrane as a helical span at residues 328–348 (YFHLITWSIPFVLTVAILAVA). Over 349–371 (QVDGDSVSGICFVGYKNYRYRAG) the chain is Extracellular. Residue Y363 coordinates cholesterol. Residues 372 to 392 (FVLAPIGLVLIVGGYFLIRGV) traverse the membrane as a helical segment. At 393–420 (MTLFSIKSNHPGLLSEKAASKINETMLR) the chain is on the cytoplasmic side. A helical transmembrane segment spans residues 421–440 (LGIFGFLAFGFVFITFGCHF). Topologically, residues 441–493 (YDFFNQAEWERSFREYVLCEANVTIATQTNKPIPECEIKNRPSLLVEKINLFA) are extracellular. C459 and C476 are oxidised to a cystine. N-linked (GlcNAc...) asparagine glycosylation occurs at N462. The chain crosses the membrane as a helical span at residues 494-514 (MFGTGISMSTWVWTKATLLIW). The Cytoplasmic portion of the chain corresponds to 515–794 (KRTWCRLTGQ…AELLDADLDF (280 aa)). Disordered regions lie at residues 634 to 655 (LQKRSRKKKRRKKKKEEVCPER) and 723 to 773 (PFCP…RAGL). The segment covering 637–647 (RSRKKKRRKKK) has biased composition (basic residues).

This sequence belongs to the G-protein coupled receptor Fz/Smo family. As to quaternary structure, homodimer.

Its subcellular location is the cell membrane. The protein localises to the cell projection. It localises to the cilium. In terms of biological role, g protein-coupled receptor which associates with the patched protein (PTCH) to transduce hedgehog protein signaling. Binding of sonic hedgehog (SHH) to its receptor patched prevents inhibition of smoothened (SMO) by patched. When active, SMO binds to and sequesters protein kinase A catalytic subunit PRKACA at the cell membrane, preventing PRKACA-mediated phosphorylation of GLI transcription factors which releases the GLI proteins from PRKACA-mediated inhibition and allows for transcriptional activation of hedgehog pathway target genes. This is Protein smoothened (SMO) from Gallus gallus (Chicken).